The primary structure comprises 763 residues: Lysine-specific histone demethylase 1 homolog 2 (763 aa).

Residues 53–152 (QRETETEALI…FGVSAAFPAS (100 aa)) enclose the SWIRM domain. Residues E192, R194, R200, and E571 each contribute to the FAD site.

The protein belongs to the flavin monoamine oxidase family. FAD is required as a cofactor.

Its function is as follows. Probable histone demethylase. This Oryza sativa subsp. japonica (Rice) protein is Lysine-specific histone demethylase 1 homolog 2.